The primary structure comprises 470 residues: ATP synthase subunit beta 2 (470 aa).

Position 155–162 (155–162 (GGAGVGKT)) interacts with ATP.

The protein belongs to the ATPase alpha/beta chains family. As to quaternary structure, F-type ATPases have 2 components, CF(1) - the catalytic core - and CF(0) - the membrane proton channel. CF(1) has five subunits: alpha(3), beta(3), gamma(1), delta(1), epsilon(1). CF(0) has three main subunits: a(1), b(2) and c(9-12). The alpha and beta chains form an alternating ring which encloses part of the gamma chain. CF(1) is attached to CF(0) by a central stalk formed by the gamma and epsilon chains, while a peripheral stalk is formed by the delta and b chains.

Its subcellular location is the cell inner membrane. It catalyses the reaction ATP + H2O + 4 H(+)(in) = ADP + phosphate + 5 H(+)(out). Its function is as follows. Produces ATP from ADP in the presence of a proton gradient across the membrane. The catalytic sites are hosted primarily by the beta subunits. This is ATP synthase subunit beta 2 from Nitrosospira multiformis (strain ATCC 25196 / NCIMB 11849 / C 71).